The following is a 145-amino-acid chain: uncharacterized protein (145 aa).

Phosphoserine is present on Ser67.

In terms of tissue distribution, expressed in retina and retinoblastoma.

This is an uncharacterized protein from Homo sapiens (Human).